We begin with the raw amino-acid sequence, 212 residues long: Transcriptional repressor CcpN (212 aa).

The region spanning 6–70 (LNKRQEHILQ…FYTGKTGTQL (65 aa)) is the HTH deoR-type domain. The H-T-H motif DNA-binding region spans 23–42 (ITGEHIAEKLNLTRATLRPD). CBS domains lie at 83–139 (FQSI…QQEL) and 148–211 (MTRM…ENEI).

Functionally, transcription repressor that binds to the promoter of gapB and pckA genes, preventing their expression. Acts as a regulator for catabolite repression of gluconeogenic genes. This Bacillus subtilis (strain 168) protein is Transcriptional repressor CcpN (ccpN).